The primary structure comprises 621 residues: 1-deoxy-D-xylulose-5-phosphate synthase (621 aa).

Thiamine diphosphate is bound by residues His-80 and 121 to 123 (GHS). Asp-152 serves as a coordination point for Mg(2+). Residues 153-154 (GA), Asn-181, Tyr-288, and Glu-370 contribute to the thiamine diphosphate site. Residue Asn-181 coordinates Mg(2+).

This sequence belongs to the transketolase family. DXPS subfamily. As to quaternary structure, homodimer. It depends on Mg(2+) as a cofactor. The cofactor is thiamine diphosphate.

The enzyme catalyses D-glyceraldehyde 3-phosphate + pyruvate + H(+) = 1-deoxy-D-xylulose 5-phosphate + CO2. The protein operates within metabolic intermediate biosynthesis; 1-deoxy-D-xylulose 5-phosphate biosynthesis; 1-deoxy-D-xylulose 5-phosphate from D-glyceraldehyde 3-phosphate and pyruvate: step 1/1. Functionally, catalyzes the acyloin condensation reaction between C atoms 2 and 3 of pyruvate and glyceraldehyde 3-phosphate to yield 1-deoxy-D-xylulose-5-phosphate (DXP). In Erwinia tasmaniensis (strain DSM 17950 / CFBP 7177 / CIP 109463 / NCPPB 4357 / Et1/99), this protein is 1-deoxy-D-xylulose-5-phosphate synthase.